We begin with the raw amino-acid sequence, 392 residues long: Serine protease ea (392 aa).

Residues 1–19 (MLKPSIICLFLGILAKSSA) form the signal peptide. Positions 20–127 (GQFYFPNEAA…GQCGNILSNR (108 aa)) are cleaved as a propeptide — activation peptide. Residues 36–89 (RCITPNRERALCIHLEDCKYLYGLLTTTPLRDTDRLYLSRSQCGYTNGKVLICC) form the Clip domain. 3 disulfide bridges follow: cysteine 37–cysteine 88, cysteine 47–cysteine 78, and cysteine 53–cysteine 89. Residue asparagine 107 is glycosylated (N-linked (GlcNAc...) asparagine). Intrachain disulfides connect cysteine 120–cysteine 260, cysteine 158–cysteine 174, cysteine 202–cysteine 212, cysteine 307–cysteine 324, and cysteine 334–cysteine 367. Residues 128 to 391 (IYGGMKTKID…YVDWIQNTIE (264 aa)) enclose the Peptidase S1 domain. Histidine 173 acts as the Charge relay system in catalysis. 4 residues coordinate Ca(2+): glutamate 193, aspartate 195, threonine 198, and aspartate 201. Aspartate 240 functions as the Charge relay system in the catalytic mechanism. The active-site Charge relay system is serine 338.

Belongs to the peptidase S1 family. CLIP subfamily. Interacts with Spn27A; the two proteins are covalently linked leading to inhibition of ea catalytic activity. Interacts (via Peptidase domain) with snk (via N-terminal prodomain); leads to proteolytic activation of ea by snk. Sulfation of a vitelline membrane component by pip is required for proteolytic cleavage of ea by snk but not for the interaction of ea with snk. Post-translationally, proteolytically cleaved by snk. Activation peptide and active catalytic domain remain associated by a disulfide bond. Processed ea/easter is present in extremely low amounts in the early embryo as it is rapidly converted into a high molecular mass complex made up of ea covalently bound to the serpin Spn27A. Zymogen activation is also controlled by a negative feedback loop from Dorsal.

It localises to the secreted. Its activity is regulated as follows. Activated proteolytically by snk; activation requires both activation of the ndl-gd-snk protease cascade and sulfation of a vitelline membrane component by pip. Inhibited by binding of the serpin Spn27A. Its function is as follows. Component of the extracellular signaling pathway that establishes the dorsal-ventral pathway of the embryo. A protease cascade involving ndl, gd, snk and ea results in activation of the spz Toll receptor ligand; acts downstream of ndl, gd and snk and is required for proteolytic processing of spz. Activation of ea requires both activation of the ndl-gd-snk protease cascade and sulfation of a vitelline membrane component by pip. Localized activation of the Toll receptor in the ventral region of the embryo defines cell identities along the dorsal-ventral continuum. This chain is Serine protease ea, found in Drosophila melanogaster (Fruit fly).